The chain runs to 262 residues: MARGLKKHLKRLNAPKHWMLDKLGGAFAPKPSSGPHKSRECLPLVLIIRNRLKYALTYREVISILMQRHIQVDGKVRTDKTYPAGFMDVVSIPKTNENFRLLYDTKGRFRLHSIKDEEAKFKLCKVRSIQFGQKGIPYLNTYDGRTIRYPDPLIKPNDTIKLDLEANKIVEFIKFDVGNVVMVTGGRNRGRVGVIKNREKHKGSFETIHIQDSTGHEFATRLGNVYTIGKGTKPWVSLPKGKGIKLTIIEEARKRLASQQAA.

Residues Leu42 to Asp104 form the S4 RNA-binding domain.

This sequence belongs to the eukaryotic ribosomal protein eS4 family.

The protein resides in the cytoplasm. In Arabidopsis thaliana (Mouse-ear cress), this protein is Small ribosomal subunit protein eS4x (RPS4D).